The following is a 589-amino-acid chain: MEKRTTYCGNVSAEFIEKEVVLKGWVQKRRDLGGVIFIDLRDREGIVQVVFNPEKSKEAWEIADKCRSEYVIEVKGQVVYRDKEAINPKMKTGEFEVMATDITILNTAKTTPFTIEDDNNVNDELRMKYRYLDLRRPSMTNNIKLRHQVTKTIRHYLDNHDFLDIETPYLGKSTPEGARDYLVPSRVHAGHFYALPQSPQLFKQLLMGAGFDRYYQIVRCFRDEDLRGDRQPEFTQIDIETTFLTPEEIQTYTENMLAEVMKETKGIEISVPFPRMSYDEAMARYGSDKPDTRFAMELIDVAEVVKDVDFKVFQAALENGGHVKALNAKGAADKYSRKDMDNLGKYVSQFGAKGLAWLKVEEDGLKGPIAKFLTEVSDELIAATNAEVGDILMFGADKPEIVAAALGAVRTRLGKELGLIDESKFNFLWIVDWPLFEYDEEAGRYVSAHHPFTQPKAEDVDRLATDPASVYAEAYDVVLNGYELGGGSLRIHTRELQEKMFETLGFTKEEAQDQFGFLLDALDYGFPPHGGIALGLDRLAMLLAGEENIREVIAFPKNGKAIDPMNNAPSLVSPLQLFELNIDVTAIDE.

An L-aspartate-binding site is contributed by Glu176. Residues 200 to 203 (QLFK) form an aspartate region. An L-aspartate-binding site is contributed by Arg222. Residues 222-224 (RDE) and Gln231 each bind ATP. His449 contributes to the L-aspartate binding site. Glu483 lines the ATP pocket. Arg490 contributes to the L-aspartate binding site. 535–538 (GLDR) lines the ATP pocket.

Belongs to the class-II aminoacyl-tRNA synthetase family. Type 1 subfamily. In terms of assembly, homodimer.

It is found in the cytoplasm. It catalyses the reaction tRNA(Asp) + L-aspartate + ATP = L-aspartyl-tRNA(Asp) + AMP + diphosphate. Functionally, catalyzes the attachment of L-aspartate to tRNA(Asp) in a two-step reaction: L-aspartate is first activated by ATP to form Asp-AMP and then transferred to the acceptor end of tRNA(Asp). In Enterococcus faecalis (strain ATCC 700802 / V583), this protein is Aspartate--tRNA ligase.